The primary structure comprises 177 residues: MSLNRSEKEAVISDVTSLAAKAQTLVMAEYRGITVADMTKLRSEARSKGVTLSVLKNTLARRAVAGSAFEIVGDQMTGPLIYGFSEDAVAAAKVVADFAKTNDKLVIRGGAFGGKALDVNGVKQLANIPSKEVLLAQLLGLMQSPISRTARVLAALAEKRGGGEAAPADAPAEAQAA.

The protein belongs to the universal ribosomal protein uL10 family. Part of the ribosomal stalk of the 50S ribosomal subunit. The N-terminus interacts with L11 and the large rRNA to form the base of the stalk. The C-terminus forms an elongated spine to which L12 dimers bind in a sequential fashion forming a multimeric L10(L12)X complex.

Functionally, forms part of the ribosomal stalk, playing a central role in the interaction of the ribosome with GTP-bound translation factors. This chain is Large ribosomal subunit protein uL10, found in Variovorax paradoxus (strain S110).